The chain runs to 474 residues: Cytochrome c biogenesis protein CcsB (474 aa).

3 consecutive transmembrane segments (helical) span residues 36–56, 96–116, and 182–202; these read LKLAIGLFLAIAAASIAGTVI, SWWFVALLLLLATSLTICTFR, and VGPIVVHVSLLLIMAGAMIGA.

It belongs to the Ccs1/CcsB family. In terms of assembly, may interact with CcsA.

The protein localises to the cell inner membrane. Its function is as follows. Required during biogenesis of c-type cytochromes (cytochrome c6 and cytochrome f) at the step of heme attachment. This chain is Cytochrome c biogenesis protein CcsB, found in Gloeobacter violaceus (strain ATCC 29082 / PCC 7421).